The following is a 99-amino-acid chain: UPF0235 protein PM1313 (99 aa).

Belongs to the UPF0235 family.

The sequence is that of UPF0235 protein PM1313 from Pasteurella multocida (strain Pm70).